The primary structure comprises 387 residues: Phosphoglycerate kinase (387 aa).

Residues 21-23, R36, 59-62, R113, and R146 each bind substrate; these read DLN and HLGR. ATP is bound by residues K197, E314, and 340–343; that span reads GGDT.

The protein belongs to the phosphoglycerate kinase family. As to quaternary structure, monomer.

Its subcellular location is the cytoplasm. The enzyme catalyses (2R)-3-phosphoglycerate + ATP = (2R)-3-phospho-glyceroyl phosphate + ADP. It functions in the pathway carbohydrate degradation; glycolysis; pyruvate from D-glyceraldehyde 3-phosphate: step 2/5. The protein is Phosphoglycerate kinase of Pseudomonas putida (strain GB-1).